A 356-amino-acid chain; its full sequence is Tyrosine recombinase XerS (356 aa).

One can recognise a Core-binding (CB) domain in the interval 16–121 (IMPWYVLDYY…ALSSLYKYLT (106 aa)). Positions 169-354 (AFLDYVDKEY…VNDEQKTALD (186 aa)) constitute a Tyr recombinase domain. Active-site residues include Arg210, Lys234, His306, Arg309, and His332. Tyr341 functions as the O-(3'-phospho-DNA)-tyrosine intermediate in the catalytic mechanism.

This sequence belongs to the 'phage' integrase family. XerS subfamily.

Its subcellular location is the cytoplasm. With respect to regulation, ftsK is required for recombination. Site-specific tyrosine recombinase, which acts by catalyzing the cutting and rejoining of the recombining DNA molecules. Essential to convert dimers of the bacterial chromosome into monomers to permit their segregation at cell division. The chain is Tyrosine recombinase XerS from Streptococcus pyogenes serotype M12 (strain MGAS9429).